The primary structure comprises 1022 residues: Sodium-dependent transporter snf-12 (1022 aa).

At 1–165 (MNGEWKSALR…RRELWRTQKD (165 aa)) the chain is on the cytoplasmic side. The chain crosses the membrane as a helical span at residues 166–185 (FFLSCLGFMVGVGHTMRFPA). Over 186 to 192 (KVYQHGG) the chain is Extracellular. A helical membrane pass occupies residues 193–213 (GVFFIPYLFSLIFFGLPLVFL). Over 214-241 (HLSLGQYTGQAANTAFQRLMPIGSGVGW) the chain is Cytoplasmic. Residues 242–262 (ALVVIAIPVAVYYNIIVAWAI) form a helical membrane-spanning segment. The Extracellular segment spans residues 263 to 337 (HYFFQSAKGL…DFALGPLQSH (75 aa)). The chain crosses the membrane as a helical span at residues 338–358 (LVLSLAAAWLLVFFGVFKGLG). A topological domain (cytoplasmic) is located at residue Ser359. The helical transmembrane segment at 360-380 (IAQTMNVTATVPYLLLSILLL) threads the bilayer. Topologically, residues 381–412 (RGISLPGANKGLTFLFTVDSTKLWKWQIWKSA) are extracellular. Residues 413 to 433 (AEQVFYELGIDAGPLISMAAF) form a helical membrane-spanning segment. At 434-444 (SRYRNNIYRDS) the chain is on the cytoplasmic side. The helical transmembrane segment at 445–465 (VLLVIMDALTSCLSGMVIFSF) threads the bilayer. Topologically, residues 466–498 (VGFIASESNSNVNDVLKHDPLYLSFTVYPGVTS) are extracellular. A helical membrane pass occupies residues 499–519 (FMYWGGLWATLFFGMLVLAAI). Over 520-550 (DAEFAWLEMIASAFMNHFSMKNKAVENRLLA) the chain is Cytoplasmic. Residues 551–571 (FLCLAGFFLGLPLCAQGGIFV) traverse the membrane as a helical segment. The Extracellular segment spans residues 572–584 (FHAIENLNANWNS). The chain crosses the membrane as a helical span at residues 585–605 (FSLALLSVAIVCYVYGIDNYL). At 606–641 (TDISAMLRVPRIQISKATRLKEKLIYFFGPGGIYIK) the chain is on the cytoplasmic side. Residues 642–662 (FSLCFICPVILTVLLVASVLG) traverse the membrane as a helical segment. Residues 663-677 (YQRISFAGRPIPIDY) lie on the Extracellular side of the membrane. A helical transmembrane segment spans residues 678-698 (EIVAWIVMIGPLLVVPLVAFM). At 699–1022 (QIRQIRNEGK…RPKPIDMPPK (324 aa)) the chain is on the cytoplasmic side. Disordered stretches follow at residues 867 to 948 (RIPN…SSDD) and 995 to 1022 (IYDQEQKNGRSKVLSQLKRPKPIDMPPK). Positions 893-907 (SDPPVPTSPLPPPPK) are enriched in pro residues. The segment covering 933 to 943 (DDSPSISNSSD) has biased composition (low complexity).

This sequence belongs to the sodium:neurotransmitter symporter (SNF) (TC 2.A.22) family. In terms of assembly, may interact with STAT family transcription factor sta-2; the interaction is probably direct.

The protein resides in the membrane. It is found in the cytoplasm. The protein localises to the vesicle. Functionally, probably mediates sodium-dependent uptake of unknown small molecule(s). By positively modulating expression, in the epidermis, of antimicrobial peptides such as nlp-29, plays a role in resistance to fungal infection and in the response to physical wounding and phorbol ester PMA treatment. Role in response to wounding of the epidermis may be facilitated by recruitment of snf-12 to the wound site by microtubule-dependent vesicle trafficking. Functions cell autonomously in the epidermis, in concert with STAT transcription factor sta-2, probably acting at vesicular membranes, downstream of a p38 MAPK/pmk-1 pathway. In Caenorhabditis elegans, this protein is Sodium-dependent transporter snf-12.